A 1451-amino-acid chain; its full sequence is MGRLKLHSGIKAIEEEPEDFECTDSSNTTTLACMIDTEIAAVLAVMRRNVRWGGRYMSGDDQLEHSLIQSLKALRKQVFSWNQPWHTISPMLYLQPFLDVIRSDETGAPITSIALSSVYKILNLNVIDQNTANIEDAMHLVVDSVTSCRFEVTDPASEEVVLMKILQVLLACMKNKASVMLSNQHVCTVVNTCFRVVHQAGMKGELLQRVARHTMHELVRCIFSHLPDVERTETTLVNRAGSIKQEKAGVDSDYAIVSKPVEDGNANSEYDVENSMATFATGAQSLMDDGPVGPGSRKPASPYDLHIMTEPYGVPSMVEIFHFLCSLLNVVEHVGMGSRSNTIAFDEDVPLFALNLINSAIELGGSSIRHHPRLLSLIQDELFRNLMQFGLSMSPLILSMVCSIVLNLYQHLRTELKLQLEAFFSCVILRLAQGKYGPSYQQQEVAMEALVNFCRQKSFMVEMYANLDCDITCSNVFEELSNLLSKSTFPVNCPLSAMHILALDGLIAVIQGMAERISNGLTGLDLGPVHLDEYTPFWMVKCDNYSDPNHWVSFVRRRKYIKRRLMIGADHFNRDPKKGLEFLQGTHLLPDKLDPQSVACFFRYTAGLDKNLVGDFLGNHDEFCVQVLNEFAGTFDFQYMNLDTALRLFLETFRLPGESQKIQRVLEAFSERYYMQSPEILANKDAALVLSYSIIMLNTDQHNVQVKKKMTEEDFIRNNRHINGGNDLPREFLSELFHSICNNEIRTTPEQGAGFPEMTPSRWIDLMHKSKKTAPYILADSRAYLDHDMFAIMSGPTIAAISVVFDHAEHEDVYQTCIDGFLAIAKISACHHLEDVLDDLVVSLCKFTTLLNPSSVDEPVLAFGDDAKARMATITIFTIANKYGDYIRTGWRNILDCILRLHKLGLLPARVASDAADESEHSSEQGQGKPLANSLSSAHLQSMGTPRRSSGLMGRFSQLLSLDTEEPRSQPTEQQLAAHQRTLQTIQKCHIDSIFTESKFLQAESLLQLARALIWAAGRPQKGTSSPEDEDTAVFCLELLIAITLNNRDRIVLLWQGVYEHIATIAQSTVMPCNLVDKAIFGLLRICQRLLPYKESLADELLRSLQLVLKLDARVADAYCEQIAIEVSRLVKANANHIRSQAGWRTITSLLSITARHPEASESGFDAVSFVMSEGTHLYPANYVLCVDAARQFAESRVGQSERSIRALDLMGDSLEFLAKWALSAKENMGEEDFGKMSQDIGEMWLRLVQGLRKVCLDQREDVRNHALQSLQKCLGGVDGINLAHSMWSQCFDKVIFTVLDDLLEIAAGSQKDYRNMEGTLLLAIKLLSKVFLQQLQELSQLSTFCKLWLGVLTRMEKYMKVKVRGKKSDKLQESVPELLKNILLVMKTKGVLLQRSALGGDSLWELTWLHVNNIAPSMRLELFPDQESSQLGDDETVSNGLSSPENTTGS.

Residues 1-246 (MGRLKLHSGI…VNRAGSIKQE (246 aa)) form a DCB domain region. Residues 557–752 (RRKYIKRRLM…NEIRTTPEQG (196 aa)) enclose the SEC7 domain. Residue Glu-658 is part of the active site. A disordered region spans residues 1430–1451 (SQLGDDETVSNGLSSPENTTGS).

As to quaternary structure, homodimer. Interacts with CYP19-4/CYP5 in vitro. Stems, leaves, flowers, siliques, floral inflorescence and roots. Expressed in the whole plant (at the protein level).

It localises to the cytoplasm. The protein resides in the cytosol. The protein localises to the endosome membrane. Its subcellular location is the cell membrane. Inhibited by brefeldin A (BFA). Functionally, activates the ARF proteins by exchanging bound GDP for free GTP. Plays a role in vesicular protein sorting. Acts as the major regulator of endosomal vesicle trafficking but is also involved in the endocytosis process. Could function redundantly with GNL1 in the retrograde Golgi to endoplasmic reticulum trafficking. Regulates vesicle trafficking required for the coordinated polar localization of auxin efflux carriers which in turn determines the direction of auxin flow. Mediates the sorting of PIN1 from endosomal compartments to the basal plasma membrane and the polarization of PIN3 to the bottom side of hypocotyl endodermal cells. Involved in the specification of apical-basal pattern formation in the early embryo and during root formation. Required for correct cell wall organization leading to normal cell adhesion during seedling development. Also plays an essential role in hydrotropism of seedling roots. The protein is ARF guanine-nucleotide exchange factor GNOM (GN) of Arabidopsis thaliana (Mouse-ear cress).